A 142-amino-acid chain; its full sequence is HTH-type transcriptional regulator MntR (142 aa).

An HTH dtxR-type domain is found at 1 to 63 (MPTPSMEDYI…YEKYRGLILT (63 aa)). Mn(2+)-binding residues include Asp-8, Glu-11, His-77, Glu-99, Glu-102, and His-103.

The protein belongs to the DtxR/MntR family. In terms of assembly, homodimer.

The protein localises to the cytoplasm. With respect to regulation, DNA binding is strongly activated by Mn(2+). Functionally, central regulator of manganese homeostasis. The sequence is that of HTH-type transcriptional regulator MntR from Listeria innocua serovar 6a (strain ATCC BAA-680 / CLIP 11262).